Consider the following 355-residue polypeptide: 3-isopropylmalate dehydrogenase (355 aa).

Substrate is bound by residues Arg90, Arg100, Arg128, and Asp222. Mg(2+)-binding residues include Asp222, Asp246, and Asp250. Residue 280-292 participates in NAD(+) binding; it reads GSAPDIAGKGIAN.

Belongs to the isocitrate and isopropylmalate dehydrogenases family. LeuB type 1 subfamily. As to quaternary structure, homodimer. Mg(2+) serves as cofactor. The cofactor is Mn(2+).

It is found in the cytoplasm. The enzyme catalyses (2R,3S)-3-isopropylmalate + NAD(+) = 4-methyl-2-oxopentanoate + CO2 + NADH. It functions in the pathway amino-acid biosynthesis; L-leucine biosynthesis; L-leucine from 3-methyl-2-oxobutanoate: step 3/4. Its function is as follows. Catalyzes the oxidation of 3-carboxy-2-hydroxy-4-methylpentanoate (3-isopropylmalate) to 3-carboxy-4-methyl-2-oxopentanoate. The product decarboxylates to 4-methyl-2 oxopentanoate. This is 3-isopropylmalate dehydrogenase from Burkholderia thailandensis (strain ATCC 700388 / DSM 13276 / CCUG 48851 / CIP 106301 / E264).